A 701-amino-acid chain; its full sequence is Elongation factor G 2 (701 aa).

One can recognise a tr-type G domain in the interval 8–290 (NRYRNIGIVA…AVIEFLPAPA (283 aa)). Residues 17 to 24 (AHVDAGKT), 88 to 92 (DTPGH), and 142 to 145 (NKMD) each bind GTP.

The protein belongs to the TRAFAC class translation factor GTPase superfamily. Classic translation factor GTPase family. EF-G/EF-2 subfamily.

The protein resides in the cytoplasm. Catalyzes the GTP-dependent ribosomal translocation step during translation elongation. During this step, the ribosome changes from the pre-translocational (PRE) to the post-translocational (POST) state as the newly formed A-site-bound peptidyl-tRNA and P-site-bound deacylated tRNA move to the P and E sites, respectively. Catalyzes the coordinated movement of the two tRNA molecules, the mRNA and conformational changes in the ribosome. This Pseudoalteromonas atlantica (strain T6c / ATCC BAA-1087) protein is Elongation factor G 2.